A 160-amino-acid polypeptide reads, in one-letter code: Photosystem I reaction center subunit XI (160 aa).

The next 2 helical transmembrane spans lie at 84–104 (LIPA…YGLV) and 125–145 (FAAG…FLLE).

Belongs to the PsaL family.

It localises to the cellular thylakoid membrane. The polypeptide is Photosystem I reaction center subunit XI (Microcystis aeruginosa (strain NIES-843 / IAM M-2473)).